Consider the following 120-residue polypeptide: MNILDQLDAKSLRDDVPDFRPGDTLNVHVNIVEGNRSRVQVFKGFVMGRQGSGVRETFTVRKVSFGVGVERTFPVHSPIIDKIELVSRGDVRRAKLYYMRDRHGKAARIREKRESSASSK.

Belongs to the bacterial ribosomal protein bL19 family.

In terms of biological role, this protein is located at the 30S-50S ribosomal subunit interface and may play a role in the structure and function of the aminoacyl-tRNA binding site. The chain is Large ribosomal subunit protein bL19 from Kocuria rhizophila (strain ATCC 9341 / DSM 348 / NBRC 103217 / DC2201).